The chain runs to 78 residues: Exodeoxyribonuclease 7 small subunit (78 aa).

The protein belongs to the XseB family. In terms of assembly, heterooligomer composed of large and small subunits.

The protein resides in the cytoplasm. It catalyses the reaction Exonucleolytic cleavage in either 5'- to 3'- or 3'- to 5'-direction to yield nucleoside 5'-phosphates.. Functionally, bidirectionally degrades single-stranded DNA into large acid-insoluble oligonucleotides, which are then degraded further into small acid-soluble oligonucleotides. The chain is Exodeoxyribonuclease 7 small subunit from Finegoldia magna (strain ATCC 29328 / DSM 20472 / WAL 2508) (Peptostreptococcus magnus).